We begin with the raw amino-acid sequence, 349 residues long: Protein RecA (349 aa).

65–72 provides a ligand contact to ATP; it reads GPESSGKT.

This sequence belongs to the RecA family.

The protein localises to the cytoplasm. Can catalyze the hydrolysis of ATP in the presence of single-stranded DNA, the ATP-dependent uptake of single-stranded DNA by duplex DNA, and the ATP-dependent hybridization of homologous single-stranded DNAs. It interacts with LexA causing its activation and leading to its autocatalytic cleavage. The chain is Protein RecA from Enterococcus faecium (Streptococcus faecium).